The sequence spans 75 residues: Xibalbin-13 2 (75 aa).

Residues 1–27 form the signal peptide; the sequence is MKEANTRRYIYLCLVVVLLSIIITTEA. A propeptide spanning residues 28 to 30 is cleaved from the precursor; sequence EDD. Intrachain disulfides connect cysteine 34–cysteine 49, cysteine 41–cysteine 54, cysteine 48–cysteine 65, and cysteine 56–cysteine 63.

It belongs to the xibalbin-13 family. As to expression, expressed by the venom gland and the whole body.

Its subcellular location is the secreted. Its function is as follows. Probable neurotoxin. Strongly inhibits voltage-gated potassium channels (Kv1.1/KCNA1, Kv1.2/KCNA2, Kv1.3/KCNA3, and Kv1.6/KCNA6, with the highest toxicity against Kv1.1 (85.1% inhibition at 1 uM)) and mildly inhibits sodium channels (Nav1.2/SCN2A, Nav1.4/SCN4A, Nav1.5/SCN5A, Nav1.6/SCN8A, and BgNav). Induces activation of protein kinase A type II (PKA-II) and MAP kinase Erk1/2 in primary nociceptive and non-nociceptive sensory neurons. Does not show cytotoxic activity. Does not have an impact on Ca2+, cAMP, and NO signaling in the cell types analyzed. Does not interfere with the adhesion of leukocytes to endothelial cells. The chain is Xibalbin-13 2 from Xibalbanus tulumensis (Blind cave remipede).